The chain runs to 538 residues: ATP synthase subunit alpha, mitochondrial (538 aa).

197 to 204 contributes to the ATP binding site; it reads GDRQTGKT. Positions 228–248 are essential and sufficient for enterobactin binding; it reads FCIYVAVGQKRSTVAQIVKRL.

This sequence belongs to the ATPase alpha/beta chains family. In terms of assembly, subunit of the F-type ATPase which has 2 components, CF(1) - the catalytic core - and CF(0) - the membrane proton channel. Ubiquitous (at protein level).

It is found in the mitochondrion. Its subcellular location is the mitochondrion inner membrane. Functionally, mitochondrial membrane ATP synthase (F(1)F(0) ATP synthase or Complex V) produces ATP from ADP in the presence of a proton gradient across the membrane which is generated by electron transport complexes of the respiratory chain. F-type ATPases consist of two structural domains, F(1) - containing the extramembraneous catalytic core, and F(0) - containing the membrane proton channel, linked together by a central stalk and a peripheral stalk. During catalysis, ATP synthesis in the catalytic domain of F(1) is coupled via a rotary mechanism of the central stalk subunits to proton translocation. Subunits alpha and beta form the catalytic core in F(1). Rotation of the central stalk against the surrounding subunits leads to hydrolysis of ATP in three separate catalytic sites on the beta subunits. Subunit alpha does not bear the catalytic high-affinity ATP-binding sites. Binds the bacterial siderophore enterobactin and is required for the assimilation of enterobactin-bound iron from non-pathogenic bacteria. Promotes mitochondrial accumulation of enterobactin-derived iron ions. The sequence is that of ATP synthase subunit alpha, mitochondrial from Caenorhabditis elegans.